Consider the following 931-residue polypeptide: ORF4 polyprotein (931 aa).

Proteolytic processing of ORF4 polyprotein yields the VP4a, VP4b and VP4c capsid proteins.

The protein resides in the virion. Functionally, ORF4 polyprotein codes for VP4a, VP4b, and VP4c, three of the four proteins that self-assemble to form the icosahedral capsid. The capsid is made of VP3 (coded by ORF3), VP4a, VP4b and VP4c. This Drosophila melanogaster (Fruit fly) protein is ORF4 polyprotein.